A 448-amino-acid chain; its full sequence is Homogentisate 1,2-dioxygenase (448 aa).

Positions 1-26 (MNMLAPAAKNAFTPASPDRPAYQSGF) are disordered. Residue His-302 is the Proton acceptor of the active site. The Fe cation site is built by His-345 and Glu-351. 2 residues coordinate homogentisate: Tyr-360 and His-381. Position 381 (His-381) interacts with Fe cation.

This sequence belongs to the homogentisate dioxygenase family. As to quaternary structure, hexamer; dimer of trimers. It depends on Fe cation as a cofactor.

It catalyses the reaction homogentisate + O2 = 4-maleylacetoacetate + H(+). It functions in the pathway amino-acid degradation; L-phenylalanine degradation; acetoacetate and fumarate from L-phenylalanine: step 4/6. Its function is as follows. Involved in the catabolism of homogentisate (2,5-dihydroxyphenylacetate or 2,5-OH-PhAc), a central intermediate in the degradation of phenylalanine and tyrosine. Catalyzes the oxidative ring cleavage of the aromatic ring of homogentisate to yield maleylacetoacetate. This Ralstonia nicotianae (strain ATCC BAA-1114 / GMI1000) (Ralstonia solanacearum) protein is Homogentisate 1,2-dioxygenase.